The chain runs to 881 residues: MDTAEIRSRFLNHFARRGHTIVPSASLVAQDPTLLLVNAGMVPFKPYFLGDLATPWPRATSVQKVVRTVDIENVGRTARHASFFQMCGNFSFGDYFKAEAIPFAFELLVDGFGFKPDDLWATVYLDDDEAEGIWRELLPAERIQRRGKEDNFWSMGVPGPCGPCSEIYFDRGAAYGREGGPIADEERYLEVWNLVFMQYERGEGAGYDYPILRELPARNIDTGMGLERMATILQGVDNLYEIDISRPVLDLAGQLTGRRYGADPADDVRLRVVADHSRTAAMLIADGVVPSNEGRGYVLRRLLRRAVRDARLLGAREPVMSELFGAIGTAMGPIYPELVDNAETITGVAVAEEASFAETLRTGTTIFDAAVRQVRSTGAATLGGDEAFKLHDTYGFPIDLTLEMAAEAGLSVDEAGFRRLMERQRQTAKADRAARRIGNVDLSAFRPILARSGATTFTGYEELSRESGVVGLVGIADGAGLTVVGEGDEVGVVLDATPFYAESGGQEPDFGLLRFDGGEVEVLDVQRPVPELVLHRVKVRSGELRLGDRVQAEVDENRRRAVSRSHTATHLVHAAFRRALGEGATQAGSLNSPGRLRFDFHALGAVPPSVLTDVEDEINEVALRDLPVRAFVTTQEEARRLGAMALFGEKYGDAVRVVDVGDYARELCGGTHVASSAQLGAVKLLSESSISAGTRRVEGLVGIDAFRYLAREHLLVSQLSTALKARPDELADRVTDIVGRLRDAERELDRLRAAAVLAGAGALAEGAEDVGGVAVVTAEVPAGTSPDDVRLLAMDVRGRLAGRPAVVAVVKADGSSIVVVTDSGARSAGLRAGELVRNSWASLGGKGGGKPDIAQGGGGNSEMIPAVFAKLRGLVAELASR.

Residues His-566, His-570, Cys-668, and His-672 each contribute to the Zn(2+) site.

Belongs to the class-II aminoacyl-tRNA synthetase family. It depends on Zn(2+) as a cofactor.

The protein resides in the cytoplasm. The catalysed reaction is tRNA(Ala) + L-alanine + ATP = L-alanyl-tRNA(Ala) + AMP + diphosphate. Its function is as follows. Catalyzes the attachment of alanine to tRNA(Ala) in a two-step reaction: alanine is first activated by ATP to form Ala-AMP and then transferred to the acceptor end of tRNA(Ala). Also edits incorrectly charged Ser-tRNA(Ala) and Gly-tRNA(Ala) via its editing domain. This is Alanine--tRNA ligase from Frankia alni (strain DSM 45986 / CECT 9034 / ACN14a).